Here is a 455-residue protein sequence, read N- to C-terminus: Argininosuccinate lyase (455 aa).

Belongs to the lyase 1 family. Argininosuccinate lyase subfamily.

It is found in the cytoplasm. It carries out the reaction 2-(N(omega)-L-arginino)succinate = fumarate + L-arginine. It participates in amino-acid biosynthesis; L-arginine biosynthesis; L-arginine from L-ornithine and carbamoyl phosphate: step 3/3. This Shewanella halifaxensis (strain HAW-EB4) protein is Argininosuccinate lyase.